We begin with the raw amino-acid sequence, 328 residues long: Protease HtpX homolog (328 aa).

2 helical membrane passes run Thr6 to Gly26 and Ser28 to Ser48. His130 is a binding site for Zn(2+). The active site involves Glu131. His134 is a binding site for Zn(2+). The next 2 helical transmembrane spans lie at Ile145–Gly165 and Pro172–Val192. Glu201 provides a ligand contact to Zn(2+). The disordered stretch occupies residues Gln279 to Ser328. The span at Ser287–Pro299 shows a compositional bias: low complexity.

It belongs to the peptidase M48B family. Zn(2+) serves as cofactor.

It localises to the cell inner membrane. The polypeptide is Protease HtpX homolog (Rhizobium rhizogenes (strain K84 / ATCC BAA-868) (Agrobacterium radiobacter)).